Consider the following 658-residue polypeptide: Exoribonuclease 2 (658 aa).

The RNB domain occupies 189-530 (REDLTSLYFT…VNHRLIKQVL (342 aa)). The S1 motif domain maps to 576-658 (AVEFDCEIAD…ETRSIVGNII (83 aa)).

It belongs to the RNR ribonuclease family. RNase II subfamily.

It is found in the cytoplasm. It catalyses the reaction Exonucleolytic cleavage in the 3'- to 5'-direction to yield nucleoside 5'-phosphates.. Functionally, involved in mRNA degradation. Hydrolyzes single-stranded polyribonucleotides processively in the 3' to 5' direction. The sequence is that of Exoribonuclease 2 from Actinobacillus pleuropneumoniae serotype 5b (strain L20).